The sequence spans 396 residues: Probable sugar efflux transporter (396 aa).

12 consecutive transmembrane segments (helical) span residues V15–L35, V50–L70, L81–F101, V103–A123, A136–I156, T169–P189, P209–Y229, F246–G266, S275–A295, L301–V321, V333–G353, and A364–F384.

The protein belongs to the major facilitator superfamily. SotB (TC 2.A.1.2) family.

The protein resides in the cell inner membrane. Functionally, involved in the efflux of sugars. The physiological role may be the reduction of the intracellular concentration of toxic sugars or sugar metabolites. This chain is Probable sugar efflux transporter, found in Salmonella schwarzengrund (strain CVM19633).